Here is a 128-residue protein sequence, read N- to C-terminus: Iron-sulfur cluster insertion protein ErpA (128 aa).

Cysteine 56, cysteine 120, and cysteine 122 together coordinate iron-sulfur cluster.

This sequence belongs to the HesB/IscA family. In terms of assembly, homodimer. Requires iron-sulfur cluster as cofactor.

Functionally, required for insertion of 4Fe-4S clusters for at least IspG. The protein is Iron-sulfur cluster insertion protein ErpA of Xylella fastidiosa (strain M12).